The sequence spans 684 residues: Nuclear transcription factor Y subunit gamma (684 aa).

Disordered regions lie at residues 1–74, 112–238, 414–487, and 511–650; these read MENQ…NIST, MNSP…SSFQ, HSPQ…TQQL, and QQQQ…KNDE. Low complexity predominate over residues 21–49; the sequence is SNSHNNHHNNNNNNNYNNNNNNNINNINN. Positions 58 to 74 are enriched in polar residues; sequence KSIQQHSPHSSTPNIST. A compositionally biased stretch (low complexity) spans 142–162; that stretch reads HQHPSSASSSSSSSSSSLSSS. A compositionally biased stretch (basic residues) spans 163–176; it reads SHHHHSNHHHHHPN. Residues 188 to 203 show a composition bias toward polar residues; it reads PSLNDSSSNGNGTPAL. Residues 220–238 show a composition bias toward low complexity; that stretch reads TPTSTPNQRFQSNGSSSFQ. Residues 414–423 show a composition bias toward polar residues; that stretch reads HSPQLQEQSS. A compositionally biased stretch (low complexity) spans 424-437; sequence NNNNNNNNNNNNNN. Composition is skewed to polar residues over residues 438–456 and 464–477; these read SVSV…SPLS and SQDY…NNHN. Composition is skewed to low complexity over residues 478–487, 511–522, and 529–637; these read QSSLSQTQQL, QQQQHSQQISQQ, and PSNS…NNNN.

It belongs to the NFYC/HAP5 subunit family. In terms of assembly, heterotrimeric transcription factor composed of three components, NF-YA, NF-YB and NF-YC. NF-YB and NF-YC must interact and dimerize for NF-YA association and DNA binding.

The protein resides in the nucleus. Functionally, stimulates the transcription of various genes by recognizing and binding to a CCAAT motif in promoters. This chain is Nuclear transcription factor Y subunit gamma (nfyc-1), found in Dictyostelium discoideum (Social amoeba).